An 885-amino-acid polypeptide reads, in one-letter code: Probable alpha-glucosidase Os06g0675700 (885 aa).

Residues 1–33 (MMGSPPAPPARRLGALAVFLLALFLAAPWGVDC) form the signal peptide. N-linked (GlcNAc...) asparagine glycans are attached at residues asparagine 195, asparagine 378, and asparagine 397. Active-site residues include aspartate 443 and glutamate 446. N-linked (GlcNAc...) asparagine glycosylation is found at asparagine 467 and asparagine 477. Aspartate 540 acts as the Proton donor in catalysis. Residues asparagine 576 and asparagine 844 are each glycosylated (N-linked (GlcNAc...) asparagine).

Belongs to the glycosyl hydrolase 31 family.

It catalyses the reaction Hydrolysis of terminal, non-reducing (1-&gt;4)-linked alpha-D-glucose residues with release of alpha-D-glucose.. The polypeptide is Probable alpha-glucosidase Os06g0675700 (Oryza sativa subsp. japonica (Rice)).